The sequence spans 212 residues: A-kinase-interacting protein 1 (212 aa).

As to quaternary structure, interacts with PRKACA and RELA.

It localises to the nucleus. Enhances NF-kappa-B transcriptional activity by regulating the nuclear localization of the NF-kappa-B subunit RELA and promoting the phosphorylation of RELA by PRKACA. Regulates the effect of the cAMP-dependent protein kinase signaling pathway on the NF-kappa-B activation cascade. This is A-kinase-interacting protein 1 (Akip1) from Mus musculus (Mouse).